A 475-amino-acid chain; its full sequence is 3-hydroxyadipyl-CoA dehydrogenase (475 aa).

The protein belongs to the 3-hydroxyacyl-CoA dehydrogenase family. Homotrimer.

The enzyme catalyses (3S)-3-hydroxyadipyl-CoA + NAD(+) = 3-oxoadipyl-CoA + NADH + H(+). It functions in the pathway aromatic compound metabolism; phenylacetate degradation. In terms of biological role, catalyzes the oxidation of 3-hydroxyadipyl-CoA to yield 3-oxoadipyl-CoA. The chain is 3-hydroxyadipyl-CoA dehydrogenase (paaH) from Escherichia coli (strain K12).